A 347-amino-acid chain; its full sequence is Fructose-1,6-bisphosphatase class 1 (347 aa).

Residues E107, D128, L130, and D131 each coordinate Mg(2+). Residues D131–S134, N224, Y257, and K286 each bind substrate. Mg(2+) is bound at residue E292.

Belongs to the FBPase class 1 family. Homotetramer. It depends on Mg(2+) as a cofactor.

It is found in the cytoplasm. It carries out the reaction beta-D-fructose 1,6-bisphosphate + H2O = beta-D-fructose 6-phosphate + phosphate. The protein operates within carbohydrate biosynthesis; gluconeogenesis. This is Fructose-1,6-bisphosphatase class 1 from Sorangium cellulosum (strain So ce56) (Polyangium cellulosum (strain So ce56)).